An 83-amino-acid chain; its full sequence is Aspergillic acid biosynthesis cluster protein F (83 aa).

Its pathway is secondary metabolite biosynthesis. Functionally, part of the gene cluster that mediates the biosynthesis of aspergillic acid, a hydroxamic acid-containing pyrazinone with aliphatic side chains that originates from leucine (Leu) and isoleucine (Ile). Aspergillic acid has antibiotic properties and was shown to be lethal to mice. The first step in the pathway is the production of deoxyaspergillic acid via a condensation between the Ile amine and the Leu carboxylic acid, followed by a reductive release from the protein forming the dipeptide aldehyde NH(2)-Leu-Ile-CHO, which could undergo an intermolecular cyclization resulting in a dihydropyrazinone. As the NRPS asaC lacks a condensation domain, it is improbable that it is responsible for condensation of Leu and Ile. One possibility is that asaC acts on a previously condensed dipeptide and functions as a Leu-Ile reductase to yield deoxyaspergillic acid. After asaC forms deoxyaspergillic acid, the cytochrome P450 asaD oxidizes the pyrazinone to the hydroxamic acid-containing bioactive metabolite aspergillic acid. The hydroxylase/desaturase asaB can then convert aspergillic acid to hydroxyaspergillic acid. Both aspergillic acid and hydroxyaspergillic acid can form complexes with iron producing ferriaspergillin analogs. The protein is Aspergillic acid biosynthesis cluster protein F of Aspergillus flavus (strain ATCC 200026 / FGSC A1120 / IAM 13836 / NRRL 3357 / JCM 12722 / SRRC 167).